Consider the following 436-residue polypeptide: 3-ketoacyl-CoA thiolase (436 aa).

C99 (acyl-thioester intermediate) is an active-site residue. Catalysis depends on proton acceptor residues H392 and C422.

The protein belongs to the thiolase-like superfamily. Thiolase family. In terms of assembly, heterotetramer of two alpha chains (FadJ) and two beta chains (FadI).

It is found in the cytoplasm. The catalysed reaction is an acyl-CoA + acetyl-CoA = a 3-oxoacyl-CoA + CoA. It participates in lipid metabolism; fatty acid beta-oxidation. Functionally, catalyzes the final step of fatty acid oxidation in which acetyl-CoA is released and the CoA ester of a fatty acid two carbons shorter is formed. The sequence is that of 3-ketoacyl-CoA thiolase from Shewanella sp. (strain ANA-3).